The sequence spans 603 residues: Coiled-coil domain-containing protein 148 (603 aa).

Coiled-coil stretches lie at residues 365 to 429 (LAKD…KKKK) and 461 to 510 (EQSL…KQVA).

This Macaca fascicularis (Crab-eating macaque) protein is Coiled-coil domain-containing protein 148 (CCDC148).